Reading from the N-terminus, the 609-residue chain is Pair-rule protein odd-paired (609 aa).

Residues 20-41 form a disordered region; the sequence is RMSPNTTASNSNAQQQQQQQLE. The segment covering 22–32 has biased composition (polar residues); the sequence is SPNTTASNSNA. Residues 210–249 form a C2H2-type 1; atypical zinc finger; that stretch reads MQCLWIDPDQPGLVPPGGRKTCNKVFHSMHEIVTHLTVEH. 4 consecutive C2H2-type zinc fingers follow at residues 258 to 285, 291 to 315, 321 to 345, and 351 to 375; these read HACF…IRVH, FACP…KRTH, FKCE…SHVH, and YNCR…MKVH. Disordered regions lie at residues 373-550 and 583-609; these read KVHG…ASAS and EAMN…ATAY. Positions 399–409 are enriched in polar residues; that stretch reads IITGGAQTPPS. Low complexity-rich tracts occupy residues 414 to 434 and 449 to 498; these read GSAG…IKSS and HLGA…LTAH. Over residues 528–537 the composition is skewed to basic residues; sequence SHHHHPHHHQ. A compositionally biased stretch (low complexity) spans 538–550; sequence AAPSPGAAAASAS. The segment covering 591–601 has biased composition (basic residues); it reads FGHHHHHHHLM.

Belongs to the GLI C2H2-type zinc-finger protein family. Expressed throughout all segment primordia; expressed ubiquitously in the ectoderm and mesoderm precursors.

The protein localises to the nucleus. Transcription factor essential for parasegmental subdivision of the embryo. It is involved in the activation of wingless (wg) in odd parasegments. It is also required for the timely activation of wg in the remaining parasegments and for the timely activation of engrailed (en) in all parasegments. This Drosophila melanogaster (Fruit fly) protein is Pair-rule protein odd-paired (opa).